The chain runs to 690 residues: Glycine--tRNA ligase 1, mitochondrial (690 aa).

Residues 1–24 (MSFFNISRRFYSQIVKKSVKIKRM) constitute a mitochondrion transit peptide. Position 25 is an N-acetylserine (S25). A Phosphoserine modification is found at S226. E251 is a glycine binding site. Residues 283 to 285 (RNE) and 294 to 295 (RV) contribute to the ATP site. A glycine-binding site is contributed by E302. 410 to 411 (EC) lines the ATP pocket. Phosphoserine occurs at positions 476 and 528. Residue 531 to 533 (EPS) coordinates glycine. R538 provides a ligand contact to ATP. The residue at position 689 (T689) is a Phosphothreonine.

The protein belongs to the class-II aminoacyl-tRNA synthetase family. As to quaternary structure, homodimer.

The protein resides in the cytoplasm. It is found in the mitochondrion matrix. The enzyme catalyses tRNA(Gly) + glycine + ATP = glycyl-tRNA(Gly) + AMP + diphosphate. It carries out the reaction 2 ATP + H(+) = P(1),P(4)-bis(5'-adenosyl) tetraphosphate + diphosphate. Catalyzes the ATP-dependent ligation of glycine to the 3'-end of its cognate tRNA, via the formation of an aminoacyl-adenylate intermediate (Gly-AMP). Also produces diadenosine tetraphosphate (Ap4A), a universal pleiotropic signaling molecule needed for cell regulation pathways, by direct condensation of 2 ATPs. Thereby, may play a special role in Ap4A homeostasis. The sequence is that of Glycine--tRNA ligase 1, mitochondrial (GRS1) from Saccharomyces cerevisiae (strain ATCC 204508 / S288c) (Baker's yeast).